Here is a 237-residue protein sequence, read N- to C-terminus: ATP synthase subunit a (237 aa).

4 helical membrane passes run 17 to 37 (LSDMLMITITCLIVFIIAVAA), 78 to 98 (LGVTLIMYVFVANMLGLPFWL), 178 to 198 (ILLGLLASLGTHYGVLGCGSI), and 201 to 221 (MVIMVWQAFSIFVGTIQAFIF).

Belongs to the ATPase A chain family. In terms of assembly, F-type ATPases have 2 components, CF(1) - the catalytic core - and CF(0) - the membrane proton channel. CF(1) has five subunits: alpha(3), beta(3), gamma(1), delta(1), epsilon(1). CF(0) has three main subunits: a(1), b(2) and c(9-12). The alpha and beta chains form an alternating ring which encloses part of the gamma chain. CF(1) is attached to CF(0) by a central stalk formed by the gamma and epsilon chains, while a peripheral stalk is formed by the delta and b chains.

Its subcellular location is the cell membrane. Key component of the proton channel; it plays a direct role in the translocation of protons across the membrane. The sequence is that of ATP synthase subunit a from Bacillus caldotenax.